A 712-amino-acid chain; its full sequence is NADH-quinone oxidoreductase subunit L (712 aa).

17 consecutive transmembrane segments (helical) span residues 4–24 (IILL…RLIT), 28–48 (ALVV…VVFL), 79–99 (LTAI…LYSW), 113–133 (AYKA…LMLV), 138–158 (LVQM…LIGF), 183–203 (FALG…DVIF), 216–236 (FLAW…IGAM), 256–276 (TPVS…FLVC), 290–310 (MMVV…GLVQ), 325–345 (LGYM…FHLL), 346–366 (THAF…HAMH), 385–405 (FAIM…FFSI), 421–441 (IIES…VAAA), 475–495 (AVML…GMVW), 588–608 (LSPF…YIGD), 655–675 (GDGA…IPFF), and 686–706 (YLFH…FWVV).

This sequence belongs to the complex I subunit 5 family. As to quaternary structure, NDH-1 is composed of 14 different subunits. Subunits NuoA, H, J, K, L, M, N constitute the membrane sector of the complex.

The protein localises to the cellular chromatophore membrane. It catalyses the reaction a quinone + NADH + 5 H(+)(in) = a quinol + NAD(+) + 4 H(+)(out). Functionally, NDH-1 shuttles electrons from NADH, via FMN and iron-sulfur (Fe-S) centers, to quinones in the respiratory chain. The immediate electron acceptor for the enzyme in this species is believed to be ubiquinone. Couples the redox reaction to proton translocation (for every two electrons transferred, four hydrogen ions are translocated across the cytoplasmic membrane), and thus conserves the redox energy in a proton gradient. This Rhodobacter capsulatus (Rhodopseudomonas capsulata) protein is NADH-quinone oxidoreductase subunit L (nuoL).